Consider the following 77-residue polypeptide: Serine protease inhibitor 1 (77 aa).

Positions 1 to 17 are cleaved as a signal peptide; the sequence is MMFTPLIVLTLLVLATA. Disulfide bonds link C21/C53, C30/C48, C33/C44, C37/C74, and C55/C68. The TIL domain occupies 21–74; sequence CGPNEQWSDCPGCELQCGESDKPCPAMCGDPKCYCSPDQYRRIPDGRCIRKIQC.

It is found in the secreted. In terms of biological role, defends the organism against the host's proteinases. This is Serine protease inhibitor 1 from Anisakis simplex (Herring worm).